A 301-amino-acid chain; its full sequence is 5'-adenylylsulfate reductase-like 5 (301 aa).

The signal sequence occupies residues 1–21; that stretch reads MTRCAVVAAVAAVLLVAGAAA. The Thioredoxin domain maps to 51 to 164; sequence CIRIEPSPPV…LVDFYKETTG (114 aa). Asn-139 carries N-linked (GlcNAc...) asparagine glycosylation. The chain crosses the membrane as a helical span at residues 201–221; it reads FVLLAVLFIILKVAAHFVPIV. A glycan (N-linked (GlcNAc...) asparagine) is linked at Asn-268.

It is found in the membrane. In Oryza sativa subsp. japonica (Rice), this protein is 5'-adenylylsulfate reductase-like 5 (APRL5).